A 310-amino-acid chain; its full sequence is Lipoyl synthase (310 aa).

The [4Fe-4S] cluster site is built by Cys-61, Cys-66, Cys-72, Cys-87, Cys-91, Cys-94, and Ser-300. The region spanning 73–289 is the Radical SAM core domain; it reads FNNGTATFMI…EYIALSLGFS (217 aa).

It belongs to the radical SAM superfamily. Lipoyl synthase family. [4Fe-4S] cluster is required as a cofactor.

Its subcellular location is the cytoplasm. The catalysed reaction is [[Fe-S] cluster scaffold protein carrying a second [4Fe-4S](2+) cluster] + N(6)-octanoyl-L-lysyl-[protein] + 2 oxidized [2Fe-2S]-[ferredoxin] + 2 S-adenosyl-L-methionine + 4 H(+) = [[Fe-S] cluster scaffold protein] + N(6)-[(R)-dihydrolipoyl]-L-lysyl-[protein] + 4 Fe(3+) + 2 hydrogen sulfide + 2 5'-deoxyadenosine + 2 L-methionine + 2 reduced [2Fe-2S]-[ferredoxin]. The protein operates within protein modification; protein lipoylation via endogenous pathway; protein N(6)-(lipoyl)lysine from octanoyl-[acyl-carrier-protein]: step 2/2. Catalyzes the radical-mediated insertion of two sulfur atoms into the C-6 and C-8 positions of the octanoyl moiety bound to the lipoyl domains of lipoate-dependent enzymes, thereby converting the octanoylated domains into lipoylated derivatives. The polypeptide is Lipoyl synthase (Buchnera aphidicola subsp. Cinara cedri (strain Cc)).